The following is an 868-amino-acid chain: Receptor-like protein 32 (868 aa).

The first 32 residues, 1 to 32 (MKDSWNSTSIIPFTFSSLIFFLFTFDFQDVFG), serve as a signal peptide directing secretion. Topologically, residues 33–815 (VPTKHLCRLE…PPELEEEDRE (783 aa)) are extracellular. N-linked (GlcNAc...) asparagine glycosylation is found at N73, N109, N141, and N165. LRR repeat units lie at residues 118 to 142 (LRFL…IENF), 143 to 166 (SHLT…IGNL), 168 to 188 (QLTF…FFGN), 189 to 213 (MNQL…LLNL), 214 to 237 (KHLS…MSSL), 239 to 261 (NLEY…LFTI), 262 to 285 (ASLT…NISS), 287 to 310 (STLT…ISKF), 312 to 334 (NLQD…IFTN), 335 to 360 (LKSL…LFSS), 362 to 385 (LNSI…SVAD), 389 to 412 (TQLI…LRSQ), 413 to 436 (HKMT…LWTL), 438 to 459 (KLIF…TEHG), 465 to 489 (KPSM…ICAL), 490 to 515 (RSLI…NLKS), 517 to 538 (LSFL…IFKS), 540 to 560 (RSLD…FIRL), 561 to 586 (SALE…SLKK), 588 to 606 (QVLV…HASF), 607 to 630 (HTLR…YFVN), 675 to 699 (LKIY…IGLL), 700 to 723 (KELH…MGNL), 724 to 747 (RELE…LGNL), and 749 to 772 (YLAY…QFRR). N-linked (GlcNAc...) asparagine glycosylation occurs at N233. 2 N-linked (GlcNAc...) asparagine glycosylation sites follow: N275 and N282. N342 and N347 each carry an N-linked (GlcNAc...) asparagine glycan. Residues N477 and N503 are each glycosylated (N-linked (GlcNAc...) asparagine). N-linked (GlcNAc...) asparagine glycosylation occurs at N574. N-linked (GlcNAc...) asparagine glycosylation is present at N613. 4 N-linked (GlcNAc...) asparagine glycosylation sites follow: N706, N746, N754, and N774. Residues 816–836 (VFSWIAAAIGFGPGIAFGLTI) form a helical membrane-spanning segment. Residues 837–868 (RYILVFYKPDWFMHTFGHLQPSAHEKRLRRKQ) are Cytoplasmic-facing.

The protein belongs to the RLP family.

It localises to the cell membrane. This Arabidopsis thaliana (Mouse-ear cress) protein is Receptor-like protein 32.